The sequence spans 77 residues: UPF0291 protein RBAM_017680 (77 aa).

The segment at 55–77 is disordered; the sequence is IDPEGNDVTPEKLKREQQKNNLH. A compositionally biased stretch (basic and acidic residues) spans 63 to 77; the sequence is TPEKLKREQQKNNLH.

Belongs to the UPF0291 family.

Its subcellular location is the cytoplasm. The sequence is that of UPF0291 protein RBAM_017680 from Bacillus velezensis (strain DSM 23117 / BGSC 10A6 / LMG 26770 / FZB42) (Bacillus amyloliquefaciens subsp. plantarum).